Here is a 749-residue protein sequence, read N- to C-terminus: uncharacterized protein (749 aa).

Disordered stretches follow at residues 1–58, 124–170, 200–291, and 385–405; these read MGTV…QPSN, DANA…PSPL, SRFS…PPVS, and YTWS…NPST. Residues 13–24 show a composition bias toward low complexity; that stretch reads LNNGLSSNNGSS. Composition is skewed to polar residues over residues 149-159, 238-252, 265-275, and 388-405; these read KSASKDSNAFN, ESKT…PSLN, LNYQNSSLNPS, and SRHS…NPST. Residues 644–729 enclose the PSP1 C-terminal domain; that stretch reads KRILRKAQPH…YKTRIWMCAV (86 aa).

This is an uncharacterized protein from Schizosaccharomyces pombe (strain 972 / ATCC 24843) (Fission yeast).